Here is a 369-residue protein sequence, read N- to C-terminus: Queuine tRNA-ribosyltransferase (369 aa).

Aspartate 90 functions as the Proton acceptor in the catalytic mechanism. Substrate contacts are provided by residues 90 to 94 (DSGGF), aspartate 144, glutamine 186, and glycine 213. Positions 244–250 (GVGKPAD) are RNA binding. The active-site Nucleophile is the aspartate 263. 4 residues coordinate Zn(2+): cysteine 301, cysteine 303, cysteine 306, and histidine 332.

Belongs to the queuine tRNA-ribosyltransferase family. As to quaternary structure, homodimer. Within each dimer, one monomer is responsible for RNA recognition and catalysis, while the other monomer binds to the replacement base PreQ1. Zn(2+) serves as cofactor.

It catalyses the reaction 7-aminomethyl-7-carbaguanine + guanosine(34) in tRNA = 7-aminomethyl-7-carbaguanosine(34) in tRNA + guanine. It functions in the pathway tRNA modification; tRNA-queuosine biosynthesis. Functionally, catalyzes the base-exchange of a guanine (G) residue with the queuine precursor 7-aminomethyl-7-deazaguanine (PreQ1) at position 34 (anticodon wobble position) in tRNAs with GU(N) anticodons (tRNA-Asp, -Asn, -His and -Tyr). Catalysis occurs through a double-displacement mechanism. The nucleophile active site attacks the C1' of nucleotide 34 to detach the guanine base from the RNA, forming a covalent enzyme-RNA intermediate. The proton acceptor active site deprotonates the incoming PreQ1, allowing a nucleophilic attack on the C1' of the ribose to form the product. After dissociation, two additional enzymatic reactions on the tRNA convert PreQ1 to queuine (Q), resulting in the hypermodified nucleoside queuosine (7-(((4,5-cis-dihydroxy-2-cyclopenten-1-yl)amino)methyl)-7-deazaguanosine). This Dichelobacter nodosus (strain VCS1703A) protein is Queuine tRNA-ribosyltransferase.